A 267-amino-acid chain; its full sequence is Hydroxyethylthiazole kinase 2 (267 aa).

A substrate-binding site is contributed by Met41. Residues Lys116 and Thr166 each contribute to the ATP site. Gly193 is a binding site for substrate.

It belongs to the Thz kinase family. Mg(2+) is required as a cofactor.

It carries out the reaction 5-(2-hydroxyethyl)-4-methylthiazole + ATP = 4-methyl-5-(2-phosphooxyethyl)-thiazole + ADP + H(+). Its pathway is cofactor biosynthesis; thiamine diphosphate biosynthesis; 4-methyl-5-(2-phosphoethyl)-thiazole from 5-(2-hydroxyethyl)-4-methylthiazole: step 1/1. Functionally, catalyzes the phosphorylation of the hydroxyl group of 4-methyl-5-beta-hydroxyethylthiazole (THZ). In Streptococcus pneumoniae (strain JJA), this protein is Hydroxyethylthiazole kinase 2.